Consider the following 329-residue polypeptide: Flotillin-like protein FloA (329 aa).

2 consecutive transmembrane segments (helical) span residues 4–24 (IAFILIVGAILVFISLFFAIV) and 26–46 (VGLWISAFAANVRVSIFTLIG).

It belongs to the flotillin-like FloA family. Homooligomerizes.

It localises to the cell membrane. The protein resides in the membrane raft. Its function is as follows. Found in functional membrane microdomains (FMM) that may be equivalent to eukaryotic membrane rafts. FMMs are highly dynamic and increase in number as cells age. Flotillins are thought to be important factors in membrane fluidity. This Acetivibrio thermocellus (strain ATCC 27405 / DSM 1237 / JCM 9322 / NBRC 103400 / NCIMB 10682 / NRRL B-4536 / VPI 7372) (Clostridium thermocellum) protein is Flotillin-like protein FloA.